Here is a 386-residue protein sequence, read N- to C-terminus: O-methyltransferase 12 (386 aa).

S-adenosyl-L-homocysteine-binding residues include Ser-207, Gly-231, Asp-254, Asp-274, and Lys-288. Asp-254 lines the S-adenosyl-L-methionine pocket. His-292 functions as the Proton acceptor in the catalytic mechanism.

It belongs to the class I-like SAM-binding methyltransferase superfamily. Cation-independent O-methyltransferase family. Homodimer. As to expression, expressed at high levels in all tissues.

It carries out the reaction 4-hydroxy-3,5-dimethoxyphenethylamine + S-adenosyl-L-methionine = mescaline + S-adenosyl-L-homocysteine + H(+). It catalyses the reaction dopamine + S-adenosyl-L-methionine = 4-methoxytyramine + S-adenosyl-L-homocysteine + H(+). Its pathway is aromatic compound metabolism. It participates in alkaloid biosynthesis. Functionally, O-methyltransferase participating in the biosynthesis of natural products derived from phenylethylamine, including mescaline, a natural hallucinogen potentially used in psychotherapeutic treatments. Catalyzes the O-methylation of dopamine, 4-hydroxy-3,5-dimethoxyphenethylamine, 4,5-dihydroxy-3-methoxyphenethylamine and N-methyl-4,5-dihydroxy-3-methoxyphenethylamine. Also involved in the conversion of N-methyl-4-hydroxy-3,5-dimethoxyphenethylamine to N-methylmescaline. This Lophophora williamsii (Peyote) protein is O-methyltransferase 12.